The chain runs to 229 residues: Potassium/proton antiporter CemA (229 aa).

The next 3 helical transmembrane spans lie at 6-26 (AFIPFFYFTSIVFLPWLISLC), 107-127 (ILHFSTNLISFVILSGYSFWG), and 189-209 (ILSGLVSTFPVILDTIFKYWI).

It belongs to the CemA family.

It is found in the plastid. Its subcellular location is the chloroplast inner membrane. It catalyses the reaction K(+)(in) + H(+)(out) = K(+)(out) + H(+)(in). In terms of biological role, contributes to K(+)/H(+) antiport activity by supporting proton efflux to control proton extrusion and homeostasis in chloroplasts in a light-dependent manner to modulate photosynthesis. Prevents excessive induction of non-photochemical quenching (NPQ) under continuous-light conditions. Indirectly promotes efficient inorganic carbon uptake into chloroplasts. This is Potassium/proton antiporter CemA from Arabis hirsuta (Hairy rock-cress).